We begin with the raw amino-acid sequence, 238 residues long: Uridylate kinase (238 aa).

12 to 15 (KLSG) provides a ligand contact to ATP. Gly-54 serves as a coordination point for UMP. Residues Gly-55 and Arg-59 each coordinate ATP. UMP is bound by residues Asp-74 and 135–142 (TGNPFFTT). Positions 162, 168, and 171 each coordinate ATP.

Belongs to the UMP kinase family. As to quaternary structure, homohexamer.

It localises to the cytoplasm. It catalyses the reaction UMP + ATP = UDP + ADP. Its pathway is pyrimidine metabolism; CTP biosynthesis via de novo pathway; UDP from UMP (UMPK route): step 1/1. Its activity is regulated as follows. Inhibited by UTP. Catalyzes the reversible phosphorylation of UMP to UDP. The protein is Uridylate kinase of Aromatoleum aromaticum (strain DSM 19018 / LMG 30748 / EbN1) (Azoarcus sp. (strain EbN1)).